We begin with the raw amino-acid sequence, 240 residues long: Proteasome subunit beta type-1 (240 aa).

An N-acetylmethionine modification is found at M1. Residues 1–27 (MLSTAAYRDPDRELVMGPQGSAGPVQM) constitute a propeptide that is removed on maturation. O-linked (GlcNAc) serine glycosylation occurs at S57. 2 positions are modified to phosphoserine: S61 and S67. Y149 bears the Phosphotyrosine mark. The residue at position 161 (S161) is a Phosphoserine. K203 carries the post-translational modification N6-acetyllysine. The O-linked (GlcNAc) serine glycan is linked to S208.

The protein belongs to the peptidase T1B family. As to quaternary structure, the 26S proteasome consists of a 20S proteasome core and two 19S regulatory subunits. The 20S proteasome core is a barrel-shaped complex made of 28 subunits that are arranged in four stacked rings. The two outer rings are each formed by seven alpha subunits, and the two inner rings are formed by seven beta subunits. The proteolytic activity is exerted by three beta-subunits PSMB5, PSMB6 and PSMB7. Interacts with SERPINB2. Interacts with RFPL4A. In terms of tissue distribution, ubiquitous.

The protein resides in the cytoplasm. Its subcellular location is the nucleus. Functionally, non-catalytic component of the 20S core proteasome complex involved in the proteolytic degradation of most intracellular proteins. This complex plays numerous essential roles within the cell by associating with different regulatory particles. Associated with two 19S regulatory particles, forms the 26S proteasome and thus participates in the ATP-dependent degradation of ubiquitinated proteins. The 26S proteasome plays a key role in the maintenance of protein homeostasis by removing misfolded or damaged proteins that could impair cellular functions, and by removing proteins whose functions are no longer required. Associated with the PA200 or PA28, the 20S proteasome mediates ubiquitin-independent protein degradation. This type of proteolysis is required in several pathways including spermatogenesis (20S-PA200 complex) or generation of a subset of MHC class I-presented antigenic peptides (20S-PA28 complex). This chain is Proteasome subunit beta type-1 (Psmb1), found in Rattus norvegicus (Rat).